We begin with the raw amino-acid sequence, 94 residues long: Putative pterin-4-alpha-carbinolamine dehydratase (94 aa).

The protein belongs to the pterin-4-alpha-carbinolamine dehydratase family.

The enzyme catalyses (4aS,6R)-4a-hydroxy-L-erythro-5,6,7,8-tetrahydrobiopterin = (6R)-L-erythro-6,7-dihydrobiopterin + H2O. This chain is Putative pterin-4-alpha-carbinolamine dehydratase, found in Mycobacterium leprae (strain Br4923).